We begin with the raw amino-acid sequence, 282 residues long: NADPH-dependent 7-cyano-7-deazaguanine reductase (282 aa).

Residue 88–90 (IES) participates in substrate binding. 90-91 (SK) is a binding site for NADPH. The Thioimide intermediate role is filled by Cys-190. The Proton donor role is filled by Asp-197. Residue 229 to 230 (HE) coordinates substrate. 258-259 (RG) contributes to the NADPH binding site.

This sequence belongs to the GTP cyclohydrolase I family. QueF type 2 subfamily. In terms of assembly, homodimer.

The protein resides in the cytoplasm. The catalysed reaction is 7-aminomethyl-7-carbaguanine + 2 NADP(+) = 7-cyano-7-deazaguanine + 2 NADPH + 3 H(+). Its pathway is tRNA modification; tRNA-queuosine biosynthesis. Its function is as follows. Catalyzes the NADPH-dependent reduction of 7-cyano-7-deazaguanine (preQ0) to 7-aminomethyl-7-deazaguanine (preQ1). The protein is NADPH-dependent 7-cyano-7-deazaguanine reductase of Escherichia coli O157:H7.